A 270-amino-acid polypeptide reads, in one-letter code: Bacterial microcompartment shell protein PduB (270 aa).

BMC circularly permuted domains are found at residues 47-152 (EFVG…DRTF) and 154-262 (DVYA…GSEP).

It belongs to the EutL/PduB family. As to quaternary structure, homotrimerizes to form a pseudohexamer with a central pore. The trimers pack into an array. Both forms interact with shell protein PduA. In purified BMCs seen as a 30.0 kDa and 25.0 kDa form; the smaller form is called PduB'.

The protein resides in the bacterial microcompartment. Its pathway is polyol metabolism; 1,2-propanediol degradation. The two proteins produced are among the major shell proteins of the bacterial microcompartment (BMC) shell dedicated to 1,2-propanediol (1,2-PD) degradation. Overexpression of the gene gives large amorphous intracellular structures; when only PduB is overexpressed large circular bodies are observed which contain concentric rings, whereas with PduB' overexpression internal bodies with regular straight-lined structures were generated. The N-terminus of the long form (PduB) is required for correct formation of BMCs. May play a major role in binding the enzyme contents to the shell. In terms of biological role, expression of a cosmid containing the full 21-gene pdu operon in E.coli allows E.coli to grow on 1,2-propanediol (1,2-PD) with the appearance of BMCs in its cytoplasm. Its function is as follows. The 1,2-PD-specific bacterial microcompartment (BMC) concentrates low levels of 1,2-PD catabolic enzymes, concentrates volatile reaction intermediates thus enhancing pathway flux and keeps the level of toxic, mutagenic propionaldehyde low. This is Bacterial microcompartment shell protein PduB from Citrobacter freundii.